We begin with the raw amino-acid sequence, 387 residues long: S-adenosylmethionine synthase (387 aa).

Residue histidine 16 participates in ATP binding. Mg(2+) is bound at residue aspartate 18. K(+) is bound at residue glutamate 44. L-methionine contacts are provided by glutamate 57 and glutamine 100. The tract at residues 100 to 110 (QSPDIAQGVDR) is flexible loop. ATP-binding positions include 167–169 (DAK), 232–233 (RF), aspartate 241, 247–248 (RK), alanine 264, and lysine 268. Aspartate 241 is an L-methionine binding site. Lysine 272 is an L-methionine binding site.

This sequence belongs to the AdoMet synthase family. Homotetramer; dimer of dimers. Mg(2+) serves as cofactor. Requires K(+) as cofactor.

The protein localises to the cytoplasm. It carries out the reaction L-methionine + ATP + H2O = S-adenosyl-L-methionine + phosphate + diphosphate. Its pathway is amino-acid biosynthesis; S-adenosyl-L-methionine biosynthesis; S-adenosyl-L-methionine from L-methionine: step 1/1. In terms of biological role, catalyzes the formation of S-adenosylmethionine (AdoMet) from methionine and ATP. The overall synthetic reaction is composed of two sequential steps, AdoMet formation and the subsequent tripolyphosphate hydrolysis which occurs prior to release of AdoMet from the enzyme. The protein is S-adenosylmethionine synthase of Cupriavidus necator (strain ATCC 17699 / DSM 428 / KCTC 22496 / NCIMB 10442 / H16 / Stanier 337) (Ralstonia eutropha).